We begin with the raw amino-acid sequence, 147 residues long: Mediator of RNA polymerase II transcription subunit 10 (147 aa).

Belongs to the Mediator complex subunit 10 family. In terms of assembly, component of the Mediator complex.

The protein resides in the nucleus. Component of the Mediator complex, a coactivator involved in the regulated transcription of nearly all RNA polymerase II-dependent genes. Mediator functions as a bridge to convey information from gene-specific regulatory proteins to the basal RNA polymerase II transcription machinery. Mediator is recruited to promoters by direct interactions with regulatory proteins and serves as a scaffold for the assembly of a functional preinitiation complex with RNA polymerase II and the general transcription factors. The sequence is that of Mediator of RNA polymerase II transcription subunit 10 (NUT2) from Debaryomyces hansenii (strain ATCC 36239 / CBS 767 / BCRC 21394 / JCM 1990 / NBRC 0083 / IGC 2968) (Yeast).